A 31-amino-acid polypeptide reads, in one-letter code: Cyclotide glopa C (31 aa).

Positions 1–31 (GDLPICGETCFEGGNCRIPGCTCVWPFCSKN) form a cross-link, cyclopeptide (Gly-Asn). Disulfide bonds link Cys6–Cys21, Cys10–Cys23, and Cys16–Cys28.

Post-translationally, this is a cyclic peptide.

Its function is as follows. Probably participates in a plant defense mechanism. The polypeptide is Cyclotide glopa C (Gloeospermum pauciflorum).